We begin with the raw amino-acid sequence, 128 residues long: Small ribosomal subunit protein uS12 (128 aa).

The disordered stretch occupies residues 1–29 (MPTINQLIRKGREPKERKSKSPALMGNPQ). D89 carries the 3-methylthioaspartic acid modification. The interval 106-128 (GVEGRRQGRSKYGAKRPKEGGKK) is disordered.

It belongs to the universal ribosomal protein uS12 family. Part of the 30S ribosomal subunit. Contacts proteins S8 and S17. May interact with IF1 in the 30S initiation complex.

In terms of biological role, with S4 and S5 plays an important role in translational accuracy. Its function is as follows. Interacts with and stabilizes bases of the 16S rRNA that are involved in tRNA selection in the A site and with the mRNA backbone. Located at the interface of the 30S and 50S subunits, it traverses the body of the 30S subunit contacting proteins on the other side and probably holding the rRNA structure together. The combined cluster of proteins S8, S12 and S17 appears to hold together the shoulder and platform of the 30S subunit. This chain is Small ribosomal subunit protein uS12, found in Dictyoglomus turgidum (strain DSM 6724 / Z-1310).